We begin with the raw amino-acid sequence, 598 residues long: N-acetylmuramoyl-L-alanine amidase (598 aa).

A signal peptide spans 1–31 (MSPGNWKTTMVVRGILLILYGLLLQPEPGTA). Disordered stretches follow at residues 172 to 194 (SSAHKDTSADVNSADVGTLSPNV) and 212 to 233 (STGVQVTSPDVQVSSPDTKAKS). The residue at position 261 (Ser-261) is a Phosphoserine. Asn-353 carries an N-linked (GlcNAc...) asparagine glycan. In terms of domain architecture, N-acetylmuramoyl-L-alanine amidase spans 428 to 554 (FLYIHHTYVP…RQLVRTDCPG (127 aa)). His-432 is a binding site for Zn(2+). Residues Cys-441 and Cys-447 are joined by a disulfide bond. Asn-507 carries N-linked (GlcNAc...) asparagine glycosylation. Positions 544 and 552 each coordinate Zn(2+).

The protein belongs to the N-acetylmuramoyl-L-alanine amidase 2 family. Zn(2+) is required as a cofactor.

Its subcellular location is the secreted. It localises to the membrane. It carries out the reaction Hydrolyzes the link between N-acetylmuramoyl residues and L-amino acid residues in certain cell-wall glycopeptides.. Functionally, may play a scavenger role by digesting biologically active peptidoglycan (PGN) into biologically inactive fragments. Has no direct bacteriolytic activity. The polypeptide is N-acetylmuramoyl-L-alanine amidase (PGLYRP2) (Sus scrofa (Pig)).